A 262-amino-acid polypeptide reads, in one-letter code: Encapsulin nanocompartment protein Rv1762c (262 aa).

Belongs to the UPF0145 family.

It localises to the encapsulin nanocompartment. Functionally, cargo protein of a type 1 encapsulin nanocompartment possibly involved in protection against oxidative stress. In Mycobacterium tuberculosis (strain ATCC 25618 / H37Rv), this protein is Encapsulin nanocompartment protein Rv1762c.